A 304-amino-acid chain; its full sequence is Aspartate carbamoyltransferase catalytic subunit (304 aa).

Residues Arg49 and Thr50 each contribute to the carbamoyl phosphate site. An L-aspartate-binding site is contributed by Lys77. Carbamoyl phosphate-binding residues include Arg99, His127, and Gln130. Positions 160 and 211 each coordinate L-aspartate. Carbamoyl phosphate contacts are provided by Ala252 and Pro253.

The protein belongs to the aspartate/ornithine carbamoyltransferase superfamily. ATCase family. Heterododecamer (2C3:3R2) of six catalytic PyrB chains organized as two trimers (C3), and six regulatory PyrI chains organized as three dimers (R2).

The catalysed reaction is carbamoyl phosphate + L-aspartate = N-carbamoyl-L-aspartate + phosphate + H(+). Its pathway is pyrimidine metabolism; UMP biosynthesis via de novo pathway; (S)-dihydroorotate from bicarbonate: step 2/3. In terms of biological role, catalyzes the condensation of carbamoyl phosphate and aspartate to form carbamoyl aspartate and inorganic phosphate, the committed step in the de novo pyrimidine nucleotide biosynthesis pathway. The chain is Aspartate carbamoyltransferase catalytic subunit from Bacillus cereus (strain ATCC 10987 / NRS 248).